The following is a 420-amino-acid chain: uncharacterized protein (420 aa).

The next 6 helical transmembrane spans lie at 26–46 (IFLL…QSVI), 66–86 (SAIK…WFTF), 231–251 (VILA…ATVL), 276–296 (IPVN…PSLL), 317–337 (GFLV…SIAF), and 369–389 (IDIL…FLTI).

The protein belongs to the CbiQ family.

The protein resides in the cell membrane. This is an uncharacterized protein from Mycoplasma genitalium (strain ATCC 33530 / DSM 19775 / NCTC 10195 / G37) (Mycoplasmoides genitalium).